The sequence spans 239 residues: Probable transcriptional regulatory protein Veis_4238 (239 aa).

A disordered region spans residues 1 to 22; sequence MAGHSKWANIQHRKGRQDEKRG.

The protein belongs to the TACO1 family.

The protein localises to the cytoplasm. The sequence is that of Probable transcriptional regulatory protein Veis_4238 from Verminephrobacter eiseniae (strain EF01-2).